A 227-amino-acid chain; its full sequence is Phosphoribosylformylglycinamidine synthase subunit PurQ (227 aa).

The Glutamine amidotransferase type-1 domain maps to 3 to 225; it reads FAVIVFPGSN…LKQWRETYVV (223 aa). C86 serves as the catalytic Nucleophile. Residues H194 and E196 contribute to the active site.

As to quaternary structure, part of the FGAM synthase complex composed of 1 PurL, 1 PurQ and 2 PurS subunits.

It is found in the cytoplasm. It catalyses the reaction N(2)-formyl-N(1)-(5-phospho-beta-D-ribosyl)glycinamide + L-glutamine + ATP + H2O = 2-formamido-N(1)-(5-O-phospho-beta-D-ribosyl)acetamidine + L-glutamate + ADP + phosphate + H(+). The enzyme catalyses L-glutamine + H2O = L-glutamate + NH4(+). The protein operates within purine metabolism; IMP biosynthesis via de novo pathway; 5-amino-1-(5-phospho-D-ribosyl)imidazole from N(2)-formyl-N(1)-(5-phospho-D-ribosyl)glycinamide: step 1/2. Functionally, part of the phosphoribosylformylglycinamidine synthase complex involved in the purines biosynthetic pathway. Catalyzes the ATP-dependent conversion of formylglycinamide ribonucleotide (FGAR) and glutamine to yield formylglycinamidine ribonucleotide (FGAM) and glutamate. The FGAM synthase complex is composed of three subunits. PurQ produces an ammonia molecule by converting glutamine to glutamate. PurL transfers the ammonia molecule to FGAR to form FGAM in an ATP-dependent manner. PurS interacts with PurQ and PurL and is thought to assist in the transfer of the ammonia molecule from PurQ to PurL. This chain is Phosphoribosylformylglycinamidine synthase subunit PurQ, found in Bacillus cereus (strain B4264).